The following is a 101-amino-acid chain: NADH-quinone oxidoreductase subunit K (101 aa).

3 helical membrane passes run 4 to 24 (LGHM…GIFL), 30 to 50 (IVLL…FVGF), and 62 to 82 (FVFF…AILV).

This sequence belongs to the complex I subunit 4L family. In terms of assembly, NDH-1 is composed of 14 different subunits. Subunits NuoA, H, J, K, L, M, N constitute the membrane sector of the complex.

Its subcellular location is the cell inner membrane. It carries out the reaction a quinone + NADH + 5 H(+)(in) = a quinol + NAD(+) + 4 H(+)(out). Functionally, NDH-1 shuttles electrons from NADH, via FMN and iron-sulfur (Fe-S) centers, to quinones in the respiratory chain. The immediate electron acceptor for the enzyme in this species is believed to be ubiquinone. Couples the redox reaction to proton translocation (for every two electrons transferred, four hydrogen ions are translocated across the cytoplasmic membrane), and thus conserves the redox energy in a proton gradient. The chain is NADH-quinone oxidoreductase subunit K from Stenotrophomonas maltophilia (strain K279a).